Here is a 151-residue protein sequence, read N- to C-terminus: Macrodomain Ter protein (151 aa).

Belongs to the MatP family. As to quaternary structure, homodimer.

It localises to the cytoplasm. Required for spatial organization of the terminus region of the chromosome (Ter macrodomain) during the cell cycle. Prevents early segregation of duplicated Ter macrodomains during cell division. Binds specifically to matS, which is a 13 bp signature motif repeated within the Ter macrodomain. This chain is Macrodomain Ter protein, found in Yersinia enterocolitica serotype O:8 / biotype 1B (strain NCTC 13174 / 8081).